The following is a 285-amino-acid chain: Vacuolar protein sorting-associated protein 37B (285 aa).

Residues 50 to 170 (ASNRSLAEGN…EMVLKGQRLP (121 aa)) form an interaction with IST1 region. One can recognise a VPS37 C-terminal domain in the interval 84 to 173 (FEAYQIKKTK…LKGQRLPQAL (90 aa)). The tract at residues 175 to 201 (PLPPRLPELAPTAPLPYPAPEASGPPA) is disordered. Arg218 bears the Omega-N-methylarginine mark. The segment at 230 to 285 (GQAVPYPGLQCPPLPPRVGLPTQQGFSSQFVSPYPPPLPQRPPPRLPPHQPGFILQ) is disordered. The segment covering 250-260 (PTQQGFSSQFV) has biased composition (polar residues). Residues 262–279 (PYPPPLPQRPPPRLPPHQ) show a composition bias toward pro residues.

This sequence belongs to the VPS37 family. In terms of assembly, component of the ESCRT-I complex (endosomal sorting complex required for transport I) which consists of TSG101, VPS28, a VPS37 protein (VPS37A to -D) and MVB12A or MVB12B in a 1:1:1:1 stoichiometry. Interacts with TSG101, VPS28, MVB12A and MVB12B. Component of the ESCRT-I complex (endosomal sorting complex required for transport I) which consists of TSG101, VPS28, a VPS37 protein (VPS37A to -D) and UBAP1 in a 1:1:1:1 stoichiometry. Interacts with CEP55. Interacts with IST1. In terms of tissue distribution, widely expressed. Expressed in macrophages and lymphocytes.

It localises to the late endosome membrane. Functionally, component of the ESCRT-I complex, a regulator of vesicular trafficking process. Required for the sorting of endocytic ubiquitinated cargos into multivesicular bodies. May be involved in cell growth and differentiation. This chain is Vacuolar protein sorting-associated protein 37B (VPS37B), found in Homo sapiens (Human).